The sequence spans 200 residues: Recombination protein RecR (200 aa).

The C4-type zinc finger occupies Cys-57–Cys-72. The 96-residue stretch at Arg-81–Pro-176 folds into the Toprim domain.

This sequence belongs to the RecR family.

In terms of biological role, may play a role in DNA repair. It seems to be involved in an RecBC-independent recombinational process of DNA repair. It may act with RecF and RecO. This Mannheimia succiniciproducens (strain KCTC 0769BP / MBEL55E) protein is Recombination protein RecR.